We begin with the raw amino-acid sequence, 171 residues long: Nudix hydrolase DR_0079 (171 aa).

One can recognise a Nudix hydrolase domain in the interval 32 to 162 (ERVRVVNAFL…EAAKGDLAEL (131 aa)). The Nudix box signature appears at 69-91 (GGAVQSGETYEEAFRREAREELN). Mg(2+)-binding residues include Glu85 and Glu89.

Belongs to the Nudix hydrolase family. As to quaternary structure, monomer. Mg(2+) serves as cofactor.

Its activity is regulated as follows. Inhibited by zinc, calcium or copper ions. Functionally, hydrolase that converts various nucleotide triphosphates (NTPs) to the corresponding nucleotide monophosphates and diphosphate, and nucleotide diphosphates to nucleotide monophosphates and inorganic phosphate. Has a marked preference for cytosine ribonucleoside 5'-diphosphate (CDP) and cytosine ribonucleoside 5'-triphosphate (CTP). Has lower activity towards the deoxyribose nucleotides dCDP and dCTP, and towards dGDP, TDP and UDP. The protein is Nudix hydrolase DR_0079 of Deinococcus radiodurans (strain ATCC 13939 / DSM 20539 / JCM 16871 / CCUG 27074 / LMG 4051 / NBRC 15346 / NCIMB 9279 / VKM B-1422 / R1).